The primary structure comprises 141 residues: ATP synthase epsilon chain (141 aa).

Belongs to the ATPase epsilon chain family. F-type ATPases have 2 components, CF(1) - the catalytic core - and CF(0) - the membrane proton channel. CF(1) has five subunits: alpha(3), beta(3), gamma(1), delta(1), epsilon(1). CF(0) has three main subunits: a, b and c.

It localises to the cell inner membrane. Its function is as follows. Produces ATP from ADP in the presence of a proton gradient across the membrane. In Methylobacillus flagellatus (strain ATCC 51484 / DSM 6875 / VKM B-1610 / KT), this protein is ATP synthase epsilon chain.